Reading from the N-terminus, the 147-residue chain is Cytochrome c-type biogenesis protein CcmE (147 aa).

Residues 1–9 lie on the Cytoplasmic side of the membrane; the sequence is MKNLKKQRR. A helical; Signal-anchor for type II membrane protein transmembrane segment spans residues 10-30; it reads IQVIALATVALVLSTALIGYA. The Periplasmic portion of the chain corresponds to 31–147; the sequence is MRDGINFFRA…EQGVYKGTEG (117 aa). Residues histidine 123 and tyrosine 127 each contribute to the heme site.

Belongs to the CcmE/CycJ family.

It localises to the cell inner membrane. Functionally, heme chaperone required for the biogenesis of c-type cytochromes. Transiently binds heme delivered by CcmC and transfers the heme to apo-cytochromes in a process facilitated by CcmF and CcmH. The polypeptide is Cytochrome c-type biogenesis protein CcmE (Roseobacter denitrificans (strain ATCC 33942 / OCh 114) (Erythrobacter sp. (strain OCh 114))).